Here is an 84-residue protein sequence, read N- to C-terminus: Small ribosomal subunit protein uS17 (84 aa).

Belongs to the universal ribosomal protein uS17 family. Part of the 30S ribosomal subunit.

In terms of biological role, one of the primary rRNA binding proteins, it binds specifically to the 5'-end of 16S ribosomal RNA. This chain is Small ribosomal subunit protein uS17, found in Borrelia hermsii (strain HS1 / DAH).